The primary structure comprises 154 residues: Cell cycle regulator of non-homologous end joining (154 aa).

Residue Met1 is modified to N-acetylmethionine. A KBM motif is present at residues 1-21; sequence METLKSENKKRVLPSWMTAPV. The interval 77 to 144 is disordered; that stretch reads EEPTLVAPDK…RSPEEEEEDA (68 aa). Low complexity predominate over residues 95-105; it reads ASPHTSSPGSS. The XLM motif lies at 144–154; it reads ALKYVREIFFS.

Interacts (via KBM motif) with XRCC5/Ku80 and XRCC6/Ku70 heterodimer. Interacts (via XLF motif) with TRIM28/KAP1, ATM, MRE11, NBN and RAD50. Interacts with splicing factor SF3B1. Interacts with ERCC6L2; this interaction is DNA independent.

Its subcellular location is the cytoplasm. It localises to the nucleus. The protein resides in the chromosome. Cell-cycle-specific regulator of classical non-homologous end joining (NHEJ) of DNA double-strand break (DSB) repair, which can act both as an activator or inhibitor of NHEJ, depending on the cell cycle phase. Acts as a regulator of DNA repair pathway choice by specifically inhibiting classical NHEJ during the S and G2 phases, thereby promoting error-free repair by homologous recombination during cell cycle phases when sister chromatids are present. Preferentially protects single-stranded overhangs at break sites by inhibiting classical NHEJ, thereby creating a local environment that favors homologous recombination. Acts via interaction with XRCC5/Ku80 and XRCC6/Ku70. In contrast, acts as an activator of NHEJ during G1 phase of the cell cycle: promotes classical NHEJ in G1 phase cells via multivalent interactions that increase the affinity of DNA damage response proteins for DSB-associated chromatin. Also involved in immunoglobulin V(D)J recombination. May act as a regulator of proteasome. In case of infection by a retrovirus, may regulate the proteasome during the uncoating phase of retrovirus. This is Cell cycle regulator of non-homologous end joining from Cricetulus griseus (Chinese hamster).